The following is a 378-amino-acid chain: D-alanine--D-alanine ligase (378 aa).

One can recognise an ATP-grasp domain in the interval 149-374; sequence KVLLAAAGIP…YTDLITKLIE (226 aa). 189-247 contributes to the ATP binding site; the sequence is EAGLQYPLFVKPSRAGSSFGVTKVEHEGDAAELAAAVYEASRHDWRILVEQGIDAREIE. 3 residues coordinate Mg(2+): Asp-328, Glu-341, and Asn-343.

This sequence belongs to the D-alanine--D-alanine ligase family. It depends on Mg(2+) as a cofactor. Mn(2+) serves as cofactor.

The protein resides in the cytoplasm. It carries out the reaction 2 D-alanine + ATP = D-alanyl-D-alanine + ADP + phosphate + H(+). Its pathway is cell wall biogenesis; peptidoglycan biosynthesis. Its function is as follows. Cell wall formation. This is D-alanine--D-alanine ligase from Bifidobacterium adolescentis (strain ATCC 15703 / DSM 20083 / NCTC 11814 / E194a).